The chain runs to 510 residues: Flagellin A (510 aa).

Belongs to the bacterial flagellin family. Heteromer of FlaA and FlaB. FlaB is located proximal to the hook while the remainder of the filament is composed of the predominant FlaA.

Its subcellular location is the secreted. It is found in the bacterial flagellum. Its function is as follows. Flagellin is the subunit protein which polymerizes to form the filaments of bacterial flagella. Important for motility and virulence. This Helicobacter pylori (strain ATCC 700392 / 26695) (Campylobacter pylori) protein is Flagellin A (flaA).